Reading from the N-terminus, the 617-residue chain is MDFSKLPKILDEDKESTFGYVHGVSGPVVTACDMAGAAMYELVRVGHSELVGEIIRLEGDMATIQVYEETSGVSVGDPVLRTGKPLSVELGPGIMGAIFDGIQRPLSDISSQTQSIYIPRGVNVSALSRDIKWDFTPCKNLRVGSHITGGDIYGIVSENSLIKHKIMLPPRNRGTVTYIAPPGNYDTSDVVLELEFEGVKEKFTMVQVWPVRQVRPVTEKLPANHPLLTGQRVLDALFPCVQGGTTAIPGAFGCGKTVISQSLSKYSNSDVIIYVGCGERGNEMSEVLRDFPELTMEVDGKVESIMKRTALVANTSNMPVAAREASIYTGITLSEYFRDMGYHVSMMADSTSRWAEALREISGRLAEMPADSGYPAYLGARLASFYERAGRVKCLGNPEREGSVSIVGAVSPPGGDFSDPVTSATLGIVQVFWGLDKKLAQRKHFPSVNWLISYSKYMRALDEYYDKHFTEFVPLRTKAKEILQEEEDLAEIVQLVGKASLAETDKITLEVAKLIKDDFLQQNGYTPYDKFCPFYKTVGMLSNMIAFYDMARRAVETTAQSDNKITWSIIREHMGDILYKLSSMKFKDPLKDGEAKIKSDYAQLLEDMQNAFRSLED.

At threonine 136 the chain carries Phosphothreonine. 250 to 257 (GAFGCGKT) provides a ligand contact to ATP. Serine 384 is subject to Phosphoserine; by AMPK.

Belongs to the ATPase alpha/beta chains family. As to quaternary structure, V-ATPase is a heteromultimeric enzyme made up of two complexes: the ATP-hydrolytic V1 complex and the proton translocation V0 complex. The V1 complex consists of three catalytic AB heterodimers that form a heterohexamer, three peripheral stalks each consisting of EG heterodimers, one central rotor including subunits D and F, and the regulatory subunits C and H. The proton translocation complex V0 consists of the proton transport subunit a, a ring of proteolipid subunits c9c'', rotary subunit d, subunits e and f, and the accessory subunits ATP6AP1/Ac45 and ATP6AP2/PRR. Interacts with the V0 complex V-ATPase subunit a4 ATP6V0A4. Interacts with WFS1. Interacts with alpha-crystallin B chain/CRYAB and with MTOR, forming a ternary complex. In terms of processing, phosphorylation at Ser-384 by AMPK down-regulates its enzyme activity.

The protein resides in the cytoplasm. Its subcellular location is the cytosol. It localises to the cytoplasmic vesicle. The protein localises to the secretory vesicle. It is found in the clathrin-coated vesicle membrane. The protein resides in the lysosome. It carries out the reaction ATP + H2O + 4 H(+)(in) = ADP + phosphate + 5 H(+)(out). Its activity is regulated as follows. ATP hydrolysis occurs at the interface between the nucleotide-binding domains of subunits A and B. ATP hydrolysis triggers a conformational change in the subunits D and F, which induces a shift of subunit d. The c-ring is subsequently rotated and results in a continuous proton translocation across the membrane. Its function is as follows. Catalytic subunit of the V1 complex of vacuolar(H+)-ATPase (V-ATPase), a multisubunit enzyme composed of a peripheral complex (V1) that hydrolyzes ATP and a membrane integral complex (V0) that translocates protons. V-ATPase is responsible for acidifying and maintaining the pH of intracellular compartments and in some cell types, is targeted to the plasma membrane, where it is responsible for acidifying the extracellular environment. In aerobic conditions, involved in intracellular iron homeostasis, thus triggering the activity of Fe(2+) prolyl hydroxylase (PHD) enzymes, and leading to HIF1A hydroxylation and subsequent proteasomal degradation. May play a role in neurite development and synaptic connectivity. The sequence is that of V-type proton ATPase catalytic subunit A (ATP6V1A) from Pongo abelii (Sumatran orangutan).